We begin with the raw amino-acid sequence, 87 residues long: Large ribosomal subunit protein bL27 (87 aa).

It belongs to the bacterial ribosomal protein bL27 family.

This Dichelobacter nodosus (strain VCS1703A) protein is Large ribosomal subunit protein bL27.